The sequence spans 674 residues: Protein asunder (674 aa).

Residues 516-538 adopt a coiled-coil conformation; sequence HKAKDQYRLLYRELEQLIQLNAS. The interval 560-579 is disordered; it reads PSKSEAGTANLRSFTESPLS. Polar residues predominate over residues 564-577; that stretch reads EAGTANLRSFTESP. A Nuclear localization signal (NLS) motif is present at residues 601 to 607; it reads LKASKRR.

It belongs to the Integrator subunit 13 family. As to quaternary structure, belongs to the multiprotein complex Integrator, at least composed of IntS1, IntS2, IntS3, IntS4, omd/IntS5, IntS6, defl/IntS7, IntS8, IntS9, IntS10, IntS11, IntS12, asun/IntS13, IntS14 and IntS15. The core complex associates with protein phosphatase 2A subunits mts/PP2A and Pp2A-29B, to form the Integrator-PP2A (INTAC) complex. In terms of processing, phosphorylated.

Its subcellular location is the nucleus. The protein resides in the cytoplasm. The protein localises to the perinuclear region. Component of the integrator complex, a multiprotein complex that terminates RNA polymerase II (Pol II) transcription in the promoter-proximal region of genes. The integrator complex provides a quality checkpoint during transcription elongation by driving premature transcription termination of transcripts that are unfavorably configured for transcriptional elongation: the complex terminates transcription by (1) catalyzing dephosphorylation of the C-terminal domain (CTD) of Pol II subunit Polr2A/Rbp1 and Spt5, and (2) degrading the exiting nascent RNA transcript via endonuclease activity. The integrator complex is also involved in the 3'-end processing of the U7 snRNA, and also the spliceosomal snRNAs U1, U2, U4 and U5. This chain is Protein asunder (asun), found in Drosophila pseudoobscura pseudoobscura (Fruit fly).